The chain runs to 424 residues: Light-independent protochlorophyllide reductase subunit N (424 aa).

Residues Cys-27, Cys-52, and Cys-113 each coordinate [4Fe-4S] cluster.

Belongs to the BchN/ChlN family. Protochlorophyllide reductase is composed of three subunits; BchL, BchN and BchB. Forms a heterotetramer of two BchB and two BchN subunits. [4Fe-4S] cluster serves as cofactor.

The enzyme catalyses chlorophyllide a + oxidized 2[4Fe-4S]-[ferredoxin] + 2 ADP + 2 phosphate = protochlorophyllide a + reduced 2[4Fe-4S]-[ferredoxin] + 2 ATP + 2 H2O. Its pathway is porphyrin-containing compound metabolism; bacteriochlorophyll biosynthesis (light-independent). In terms of biological role, component of the dark-operative protochlorophyllide reductase (DPOR) that uses Mg-ATP and reduced ferredoxin to reduce ring D of protochlorophyllide (Pchlide) to form chlorophyllide a (Chlide). This reaction is light-independent. The NB-protein (BchN-BchB) is the catalytic component of the complex. This chain is Light-independent protochlorophyllide reductase subunit N, found in Halorhodospira halophila (strain DSM 244 / SL1) (Ectothiorhodospira halophila (strain DSM 244 / SL1)).